The chain runs to 87 residues: Large ribosomal subunit protein bL31B (87 aa).

The protein belongs to the bacterial ribosomal protein bL31 family. Type B subfamily. As to quaternary structure, part of the 50S ribosomal subunit.

The protein is Large ribosomal subunit protein bL31B of Burkholderia pseudomallei (strain 1106a).